Here is a 201-residue protein sequence, read N- to C-terminus: Receptor expression-enhancing protein 1 (201 aa).

A run of 2 helical transmembrane segments spans residues 1-21 (MVSW…YPAY) and 35-55 (YVKW…ETFT). Position 152 is a phosphoserine (S152). Residues 158–201 (TIRGDGAPAPSGPPPPGTGRSSGKHSQPKMSRSASESAGSSGTA) are disordered. Residues 188–201 (SRSASESAGSSGTA) are compositionally biased toward low complexity.

It belongs to the DP1 family. As to quaternary structure, interacts with OLFR992. Interacts with SPAST and ATL1. Interacts (via C-terminus) with microtubules. Interacts with ZFYVE27. As to expression, detected in olfactory sensory neurons of the olfactory epithelium, and in total brain.

Its subcellular location is the membrane. It is found in the mitochondrion membrane. It localises to the endoplasmic reticulum. Functionally, required for endoplasmic reticulum (ER) network formation, shaping and remodeling; it links ER tubules to the cytoskeleton. May also enhance the cell surface expression of odorant receptors. The protein is Receptor expression-enhancing protein 1 (Reep1) of Mus musculus (Mouse).